The primary structure comprises 155 residues: Sweet protein mabinlin-2 (155 aa).

A signal peptide spans 1 to 20 (MAKLIFLFATLALFVLLANA). The propeptide occupies 21–35 (SIQTTVIEVDEEEDN). Residue Q36 is modified to Pyrrolidone carboxylic acid. Disulfide bonds link C40–C103, C53–C92, C93–C141, and C105–C149. Positions 64 to 86 (GGQPDELEDEVEDDNDDENQPRR) are disordered. The span at 68 to 81 (DELEDEVEDDNDDE) shows a compositional bias: acidic residues. Positions 69–82 (ELEDEVEDDNDDEN) are excised as a propeptide. Q83 carries the pyrrolidone carboxylic acid modification. P155 is a propeptide.

This sequence belongs to the 2S seed storage albumins family. Heterodimer of a small A and a large B chain linked by disulfide bonds.

Heat stable 2S seed storage protein having sweetness-inducing activity. The protein is Sweet protein mabinlin-2 of Capparis masaikai (Mabinlang).